The sequence spans 292 residues: 4-hydroxy-tetrahydrodipicolinate synthase (292 aa).

Thr45 lines the pyruvate pocket. Tyr134 acts as the Proton donor/acceptor in catalysis. Lys162 acts as the Schiff-base intermediate with substrate in catalysis. A pyruvate-binding site is contributed by Val204.

Belongs to the DapA family. In terms of assembly, homotetramer; dimer of dimers.

Its subcellular location is the cytoplasm. It carries out the reaction L-aspartate 4-semialdehyde + pyruvate = (2S,4S)-4-hydroxy-2,3,4,5-tetrahydrodipicolinate + H2O + H(+). It functions in the pathway amino-acid biosynthesis; L-lysine biosynthesis via DAP pathway; (S)-tetrahydrodipicolinate from L-aspartate: step 3/4. In terms of biological role, catalyzes the condensation of (S)-aspartate-beta-semialdehyde [(S)-ASA] and pyruvate to 4-hydroxy-tetrahydrodipicolinate (HTPA). The chain is 4-hydroxy-tetrahydrodipicolinate synthase from Marinobacter nauticus (strain ATCC 700491 / DSM 11845 / VT8) (Marinobacter aquaeolei).